The following is a 174-amino-acid chain: Inactive signal peptidase IA (174 aa).

At Met-1–Tyr-7 the chain is on the cytoplasmic side. A helical transmembrane segment spans residues Leu-8–Gly-28. The Extracellular portion of the chain corresponds to His-29–Ser-174.

Belongs to the peptidase S26 family.

Its subcellular location is the cell membrane. In terms of biological role, catalytically inactive. This is Inactive signal peptidase IA (spsA) from Staphylococcus aureus (strain Mu50 / ATCC 700699).